Consider the following 215-residue polypeptide: Probable phosphoglycerate mutase GpmB (215 aa).

Substrate contacts are provided by residues 8-15 (RHGETQWN), 21-22 (QG), R58, K60, 82-85 (ELDM), 104-105 (RR), and 151-152 (GI). H9 (tele-phosphohistidine intermediate) is an active-site residue. E82 functions as the Proton donor/acceptor in the catalytic mechanism.

Belongs to the phosphoglycerate mutase family. GpmB subfamily.

The enzyme catalyses (2R)-2-phosphoglycerate = (2R)-3-phosphoglycerate. The protein operates within carbohydrate degradation; glycolysis; pyruvate from D-glyceraldehyde 3-phosphate: step 3/5. The chain is Probable phosphoglycerate mutase GpmB from Salmonella paratyphi A (strain AKU_12601).